A 353-amino-acid chain; its full sequence is MTIALGRFTKEENDLFDIMDDWLRRDRFVFVGWSGLLLFPCAYFALGGWFTGTTFVTSWYTHGLASSYLEGCNFLTAAVSTPANSLAHSLLLLWGPEAQGDFTRWCQLGGLWTFVALHGAFALIGFMLRQFELARSVQLRPYNAIAFSGPIAVFVSVFLIYPLGQSGWFFAPSFGVAAIFRFILFFQGFHNWTLNPFHMMGVAGVLGAALLCAIHGATVENTLFEDGDGANTFRAFNPTQAEETYSMVTANRFWSQIFGVAFSNKRWLHFFMLFVPVTGLWMSALGVVGLALNLRAYDFVSQEIRAAEDPEFETFYTKNILLNEGIRAWMAAQDQPHENLIFPEEVLPRGNAL.

Thr2 carries the N-acetylthreonine modification. Residue Thr2 is modified to Phosphothreonine. A helical transmembrane segment spans residues 41–61 (CAYFALGGWFTGTTFVTSWYT). Position 118 (His118) interacts with chlorophyll a. The helical transmembrane segment at 125–141 (GFMLRQFELARSVQLRP) threads the bilayer. Residues Gln130 and Asn143 each coordinate pheophytin a. The chain crosses the membrane as a helical span at residues 153–166 (VFVSVFLIYPLGQS). His198 serves as a coordination point for chlorophyll a. Residues 208 to 228 (AALLCAIHGATVENTLFEDGD) form a helical membrane-spanning segment. A plastoquinone contacts are provided by His215 and Phe262. His215 contacts Fe cation. His269 serves as a coordination point for Fe cation. A helical membrane pass occupies residues 279–295 (GLWMSALGVVGLALNLR).

This sequence belongs to the reaction center PufL/M/PsbA/D family. PSII is composed of 1 copy each of membrane proteins PsbA, PsbB, PsbC, PsbD, PsbE, PsbF, PsbH, PsbI, PsbJ, PsbK, PsbL, PsbM, PsbT, PsbX, PsbY, PsbZ, Psb30/Ycf12, at least 3 peripheral proteins of the oxygen-evolving complex and a large number of cofactors. It forms dimeric complexes. The D1/D2 heterodimer binds P680, chlorophylls that are the primary electron donor of PSII, and subsequent electron acceptors. It shares a non-heme iron and each subunit binds pheophytin, quinone, additional chlorophylls, carotenoids and lipids. There is also a Cl(-1) ion associated with D1 and D2, which is required for oxygen evolution. The PSII complex binds additional chlorophylls, carotenoids and specific lipids. is required as a cofactor.

The protein resides in the plastid. It localises to the chloroplast thylakoid membrane. The enzyme catalyses 2 a plastoquinone + 4 hnu + 2 H2O = 2 a plastoquinol + O2. Functionally, photosystem II (PSII) is a light-driven water:plastoquinone oxidoreductase that uses light energy to abstract electrons from H(2)O, generating O(2) and a proton gradient subsequently used for ATP formation. It consists of a core antenna complex that captures photons, and an electron transfer chain that converts photonic excitation into a charge separation. The D1/D2 (PsbA/PsbD) reaction center heterodimer binds P680, the primary electron donor of PSII as well as several subsequent electron acceptors. D2 is needed for assembly of a stable PSII complex. This is Photosystem II D2 protein from Lemna minor (Common duckweed).